Consider the following 635-residue polypeptide: Dual specificity protein kinase zak2 (635 aa).

Protein kinase domains follow at residues 9-249 (WEEI…HRLI) and 299-585 (NKDD…QIYF). ATP contacts are provided by residues 15–23 (IGSCNSKSR) and K45. D124 serves as the catalytic Proton acceptor. Residues 305–313 (GGDGFFSVV) and K326 contribute to the ATP site. Catalysis depends on D427, which acts as the Proton acceptor.

In the N-terminal section; belongs to the protein kinase superfamily. Ser/Thr protein kinase family. This sequence in the C-terminal section; belongs to the protein kinase superfamily. TKL Tyr protein kinase family. C-terminal tyrosine kinase domain is capable of autophosphorylation, in vitro. As to expression, zakA and zak2 are coexpressed in prestalk cell population, zakA is enriched in pstB populations and zak1 in pstA populations. ZakA and zak2 are coexpressed in prespore cells, zakA expression levels are 10 fold higher than zak2.

It catalyses the reaction L-seryl-[protein] + ATP = O-phospho-L-seryl-[protein] + ADP + H(+). The catalysed reaction is L-threonyl-[protein] + ATP = O-phospho-L-threonyl-[protein] + ADP + H(+). The enzyme catalyses L-tyrosyl-[protein] + ATP = O-phospho-L-tyrosyl-[protein] + ADP + H(+). Its function is as follows. Positive regulator of gsk3/gskA activity required for cell pattern formation and a downstream effector of carC. The kinases, gsk3/gskA, zakA and zak2, form part of a signaling pathway that responds to extracellular cyclic AMP. The pathway has a role in transcriptional regulation; required to direct prespore/spore fates during development. Zak2 negatively regulates prestalk differentiation by regulating expression of ecmA. Phosphorylates Y-214 of gsk3/gskA, in vitro. The polypeptide is Dual specificity protein kinase zak2 (zak2) (Dictyostelium discoideum (Social amoeba)).